The sequence spans 77 residues: Putative snRNP Sm-like protein (77 aa).

In terms of domain architecture, Sm spans 8–77; that stretch reads PTLRMMLDYV…DSVVVITPAA (70 aa).

It belongs to the snRNP Sm proteins family.

The sequence is that of Putative snRNP Sm-like protein from Aeropyrum pernix (strain ATCC 700893 / DSM 11879 / JCM 9820 / NBRC 100138 / K1).